A 771-amino-acid polypeptide reads, in one-letter code: Heat shock transcription factor (771 aa).

A disordered region spans residues 1–70 (MTTNLYAIAG…GIGISKPGLS (70 aa)). 2 stretches are compositionally biased toward low complexity: residues 11-23 (PSKP…TPSP) and 31-42 (LKSLTSLPTNPL). A compositionally biased stretch (polar residues) spans 43–62 (NPQGTSTSNALTNQSSSTGI). Residues 78 to 168 (MKVPAFLNKL…PIELWEFANP (91 aa)) mediate DNA binding. The tract at residues 183–266 (RKNNRLSNSG…PPSHTSAGPL (84 aa)) is disordered. Composition is skewed to low complexity over residues 189–199 (SNSGVGSSSSL) and 212–233 (SASA…ISQG). Residues 238 to 262 (NHSTSGKYLITDGTTPGSAPPSHTS) are compositionally biased toward polar residues. Residues 280–333 (GIAAIRQTQASIATDLRKLQASNEALWRQAYETQEKQRKHEETIDLIVSFLERL) are involved in trimerization. 2 stretches are compositionally biased toward basic and acidic residues: residues 350–372 (RGVG…ARFA) and 399–415 (TGEH…DRLV). 3 disordered regions span residues 350–513 (RGVG…SSNA), 590–634 (QALT…GSGT), and 708–771 (SGVG…SGLK). A compositionally biased stretch (polar residues) spans 418-448 (GSNSEYSIPSVKRTSSSSHPLSLGQLGSSRF). 2 stretches are compositionally biased toward low complexity: residues 497-511 (LSPL…PSSS) and 599-620 (HNPS…SASA).

The protein belongs to the HSF family. In terms of assembly, homotrimer. Homotrimerization increases the affinity of HSF1 to DNA. Interacts with transcriptional coregulator SSA1 on chromatin. Post-translationally, phosphorylated at high temperature.

The protein resides in the nucleus. In terms of biological role, DNA-binding transcription factor that specifically binds heat shock promoter elements (HSE) and activates transcription. Promotes thermotolerance by transiently regulating a subset of genes. Induces expression of STI, SSA1, SSA2, HSP78 and KAR2 during the heat response. The sequence is that of Heat shock transcription factor from Cryptococcus neoformans var. grubii serotype A (strain H99 / ATCC 208821 / CBS 10515 / FGSC 9487) (Filobasidiella neoformans var. grubii).